A 490-amino-acid chain; its full sequence is Sec sixty-one protein homolog (490 aa).

The Cytoplasmic portion of the chain corresponds to 1 to 32 (MSGFRLIDIVKPILPILPEVELPFEKLPFDDK). The helical transmembrane segment at 33-53 (IVYTIFAGLIYLFAQFPLVGL) threads the bilayer. Residues 54–121 (PKATTPNVND…DRELFQSLTK (68 aa)) are Lumenal-facing. Residues 122 to 142 (VFAIVQYVILTNIFIFAGYFG) traverse the membrane as a helical segment. Over 143 to 146 (DDLS) the chain is Cytoplasmic. Residues 147–167 (VVQIGLINFQLVGAGIFTTLL) traverse the membrane as a helical segment. The Lumenal segment spans residues 168–174 (AEVIDKG). Residues 175 to 195 (FGFSSGAMIINTVVIATNLVA) form a helical membrane-spanning segment. Topologically, residues 196-242 (DTFGVSQIKVGEDDQTEAQGALINLIQGLRSKHKTFIGGIISAFNRD) are cytoplasmic. Residues 243–263 (YLPNLTTTIIVLAIAIIVCYL) traverse the membrane as a helical segment. The Lumenal portion of the chain corresponds to 264–293 (QSVRVELPIRSTRARGTNNVYPIKLLYTGC). Residues 294-314 (LSVLFSYTILFYIHIFAFVLI) form a helical membrane-spanning segment. Topologically, residues 315–339 (QLVAKNEPTHIICKIMGHYENANNL) are cytoplasmic. The chain crosses the membrane as a helical span at residues 340-360 (LAVPTFPLSLLAPPTSFFKGV). A topological domain (lumenal) is located at residue threonine 361. The helical transmembrane segment at 362-382 (QQPLTFITYSAFILVTGIWFA) threads the bilayer. The Cytoplasmic portion of the chain corresponds to 383–421 (DKWQAISGSSARDVALEFKDQGITLMGRREQNVAKELNK). The chain crosses the membrane as a helical span at residues 422-442 (VIPIAAVTGASVLSLITVIGE). Over 443–449 (SLGLKGK) the chain is Lumenal. Residues 450 to 470 (AAGIVVGIAGGFSLLEVITIE) traverse the membrane as a helical segment. At 471–490 (YQQSGGQSALNQVLGVPGAM) the chain is on the cytoplasmic side.

The protein belongs to the SecY/SEC61-alpha family. Component of the heterotrimeric Ssh1 complex, which is composed of SSH1, SBH2 and SSS1.

The protein resides in the endoplasmic reticulum membrane. In terms of biological role, part of the Ssh1 complex, which probably is the major component of a channel-forming translocon complex that may function exclusively in the cotranslational pathway of protein endoplasmic reticulum (ER) import. The sequence is that of Sec sixty-one protein homolog (SSH1) from Saccharomyces cerevisiae (strain ATCC 204508 / S288c) (Baker's yeast).